A 343-amino-acid polypeptide reads, in one-letter code: Pyridoxal 5'-phosphate synthase subunit PDX1 (343 aa).

D73 is a binding site for D-ribose 5-phosphate. Catalysis depends on K130, which acts as the Schiff-base intermediate with D-ribose 5-phosphate. G202 contributes to the D-ribose 5-phosphate binding site. Q214 is a D-glyceraldehyde 3-phosphate binding site. Residues G263 and 284-285 (GS) contribute to the D-ribose 5-phosphate site.

This sequence belongs to the PdxS/SNZ family.

The catalysed reaction is aldehydo-D-ribose 5-phosphate + D-glyceraldehyde 3-phosphate + L-glutamine = pyridoxal 5'-phosphate + L-glutamate + phosphate + 3 H2O + H(+). It functions in the pathway cofactor biosynthesis; pyridoxal 5'-phosphate biosynthesis. Catalyzes the formation of pyridoxal 5'-phosphate from ribose 5-phosphate (RBP), glyceraldehyde 3-phosphate (G3P) and ammonia. The ammonia is provided by PDX2. Can also use ribulose 5-phosphate and dihydroxyacetone phosphate as substrates, resulting from enzyme-catalyzed isomerization of RBP and G3P, respectively. Also plays an indirect role in resistance to singlet oxygen-generating photosensitizers. The chain is Pyridoxal 5'-phosphate synthase subunit PDX1 (PDX1) from Cercospora nicotianae (Barn spot disease fungus).